Here is a 124-residue protein sequence, read N- to C-terminus: Protein MT1307 (124 aa).

The segment at residues 1-35 (MTTMITLRRRFAVAVAGVATAAATTVTLAPAPANA) is a signal peptide (tat-type signal).

The protein to M.tuberculosis Rv1813c. In terms of processing, predicted to be exported by the Tat system. The position of the signal peptide cleavage has not been experimentally proven.

The sequence is that of Protein MT1307 from Mycobacterium tuberculosis (strain CDC 1551 / Oshkosh).